A 387-amino-acid polypeptide reads, in one-letter code: Cyclin-J-like protein (387 aa).

Residues aspartate 13–cysteine 142 form the Cyclin N-terminal domain.

It belongs to the cyclin family. Cyclin J subfamily.

The protein is Cyclin-J-like protein (Ccnjl) of Mus musculus (Mouse).